Here is a 63-residue protein sequence, read N- to C-terminus: Large ribosomal subunit protein bL35 (63 aa).

Basic residues predominate over residues 1–15 (MPKIKTHRGAAKRFK). Residues 1–26 (MPKIKTHRGAAKRFKQTAGGKWKGSH) form a disordered region.

The protein belongs to the bacterial ribosomal protein bL35 family.

The sequence is that of Large ribosomal subunit protein bL35 from Pelotomaculum thermopropionicum (strain DSM 13744 / JCM 10971 / SI).